Here is a 270-residue protein sequence, read N- to C-terminus: F420 non-reducing hydrogenase II cytochrome subunit (270 aa).

The next 5 membrane-spanning stretches (helical) occupy residues 27–47, 57–77, 139–159, 173–193, and 195–215; these read AIAM…WEFM, MIAV…NIFS, ILIP…IVLY, WIIS…VGFL, and VLHL…VGIL.

It belongs to the HupC/HyaC/HydC family. As to quaternary structure, composed of a large subunit (VhtA), a small subunit (VhtG) and a cytochrome subunit (VhtC). Heme b is required as a cofactor.

The protein resides in the cell membrane. The enzyme catalyses methanophenazine + H2 = dihydromethanophenazine. Functionally, part of the F420 non-reducing hydrogenase II complex that catalyzes the reduction of methanophenazine to dihydromethanophenazine. This chain is F420 non-reducing hydrogenase II cytochrome subunit, found in Methanosarcina mazei (strain ATCC BAA-159 / DSM 3647 / Goe1 / Go1 / JCM 11833 / OCM 88) (Methanosarcina frisia).